The chain runs to 616 residues: Dihydroxy-acid dehydratase (616 aa).

Asp81 is a binding site for Mg(2+). Cys122 serves as a coordination point for [2Fe-2S] cluster. Asp123 and Lys124 together coordinate Mg(2+). Lys124 bears the N6-carboxylysine mark. Cys195 is a [2Fe-2S] cluster binding site. Position 491 (Glu491) interacts with Mg(2+). Catalysis depends on Ser517, which acts as the Proton acceptor.

The protein belongs to the IlvD/Edd family. Homodimer. The cofactor is [2Fe-2S] cluster. Mg(2+) is required as a cofactor.

It carries out the reaction (2R)-2,3-dihydroxy-3-methylbutanoate = 3-methyl-2-oxobutanoate + H2O. The enzyme catalyses (2R,3R)-2,3-dihydroxy-3-methylpentanoate = (S)-3-methyl-2-oxopentanoate + H2O. It functions in the pathway amino-acid biosynthesis; L-isoleucine biosynthesis; L-isoleucine from 2-oxobutanoate: step 3/4. The protein operates within amino-acid biosynthesis; L-valine biosynthesis; L-valine from pyruvate: step 3/4. Its function is as follows. Functions in the biosynthesis of branched-chain amino acids. Catalyzes the dehydration of (2R,3R)-2,3-dihydroxy-3-methylpentanoate (2,3-dihydroxy-3-methylvalerate) into 2-oxo-3-methylpentanoate (2-oxo-3-methylvalerate) and of (2R)-2,3-dihydroxy-3-methylbutanoate (2,3-dihydroxyisovalerate) into 2-oxo-3-methylbutanoate (2-oxoisovalerate), the penultimate precursor to L-isoleucine and L-valine, respectively. The sequence is that of Dihydroxy-acid dehydratase from Yersinia pseudotuberculosis serotype I (strain IP32953).